Consider the following 317-residue polypeptide: Acetyl-coenzyme A carboxylase carboxyl transferase subunit alpha (317 aa).

Residues 39 to 293 form the CoA carboxyltransferase C-terminal domain; the sequence is KLEDKNRKLT…KDALGASLER (255 aa).

This sequence belongs to the AccA family. As to quaternary structure, acetyl-CoA carboxylase is a heterohexamer composed of biotin carboxyl carrier protein (AccB), biotin carboxylase (AccC) and two subunits each of ACCase subunit alpha (AccA) and ACCase subunit beta (AccD).

The protein resides in the cytoplasm. The enzyme catalyses N(6)-carboxybiotinyl-L-lysyl-[protein] + acetyl-CoA = N(6)-biotinyl-L-lysyl-[protein] + malonyl-CoA. It functions in the pathway lipid metabolism; malonyl-CoA biosynthesis; malonyl-CoA from acetyl-CoA: step 1/1. Component of the acetyl coenzyme A carboxylase (ACC) complex. First, biotin carboxylase catalyzes the carboxylation of biotin on its carrier protein (BCCP) and then the CO(2) group is transferred by the carboxyltransferase to acetyl-CoA to form malonyl-CoA. This Chromohalobacter salexigens (strain ATCC BAA-138 / DSM 3043 / CIP 106854 / NCIMB 13768 / 1H11) protein is Acetyl-coenzyme A carboxylase carboxyl transferase subunit alpha.